The following is a 400-amino-acid chain: Putative lysosomal acid lipase/cholesteryl ester hydrolase (400 aa).

A signal peptide spans 1 to 17; sequence MWRLIIIAILFQGLVNS. 3 N-linked (GlcNAc...) asparagine glycosylation sites follow: Asn-34, Asn-129, and Asn-159. The region spanning 78 to 378 is the AB hydrolase-1 domain; the sequence is PAVFLQHGLL…EWEHLDFIWG (301 aa). Ser-172 serves as the catalytic Charge relay system. N-linked (GlcNAc...) asparagine glycosylation is present at Asn-271. The active-site Charge relay system is His-372.

This sequence belongs to the AB hydrolase superfamily. Lipase family. As to expression, expressed by the venom gland.

It localises to the secreted. It catalyses the reaction a sterol ester + H2O = a sterol + a fatty acid + H(+). Functionally, in physiological conditions, is crucial for intracellular hydrolysis of cholesteryl esters and triglycerides that have been internalized via receptor-mediated endocytosis of lipoprotein particles. In venom, the biological contribution is unknown. The protein is Putative lysosomal acid lipase/cholesteryl ester hydrolase of Crotalus adamanteus (Eastern diamondback rattlesnake).